We begin with the raw amino-acid sequence, 155 residues long: MSQVILDLQLACEDNSGLPEESQFQTWLNAVIPQFQEESEVTIRVVDTAESHSLNLTYRGKDKPTNVLSFPFEVPPGMEMSLLGDLVICRQMVEKEAQEQGKPLEAHWAHMVVHGSLHLLGYDHIEDDEAEEMEALETEIMLALGYEDPYIAEKE.

Zn(2+) is bound by residues His114, His118, and His124.

The protein belongs to the endoribonuclease YbeY family. It depends on Zn(2+) as a cofactor.

The protein localises to the cytoplasm. In terms of biological role, single strand-specific metallo-endoribonuclease involved in late-stage 70S ribosome quality control and in maturation of the 3' terminus of the 16S rRNA. This chain is Endoribonuclease YbeY, found in Escherichia coli O157:H7.